A 176-amino-acid polypeptide reads, in one-letter code: Sigma intracellular receptor 2 (176 aa).

Topologically, residues 1–9 (MGALAARRC) are cytoplasmic. The chain crosses the membrane as a helical span at residues 10 to 30 (VEWLLGLYFVSHIPITLFIDL). The 149-residue stretch at 10–158 (VEWLLGLYFV…PYLIIPLILL (149 aa)) folds into the EXPERA domain. Over 31–68 (QAVLPPELYPQEFSNLLRWYSKEFKDPLMQEPPVWFKS) the chain is Lumenal. The chain crosses the membrane as a helical span at residues 69–89 (FLLCELVFQLPFFPIAAYAFF). Positions 75 and 77 each coordinate cholesterol. Topologically, residues 90 to 99 (KGSCRWIRIP) are cytoplasmic. Residues 100–120 (AIIYAAHTITTLIPILYTLLF) traverse the membrane as a helical segment. The Lumenal segment spans residues 121 to 140 (EDFSKAVAFKGQRPESFRER). Residues 141–161 (LTLVGVYAPYLIIPLILLLFM) traverse the membrane as a helical segment. Over 162–176 (LRNPYYKYEEKRKKK) the chain is Cytoplasmic. The ER retention motif motif lies at 172–176 (KRKKK).

It belongs to the TMEM97/sigma-2 receptor family. In terms of assembly, homodimer. Interacts with NPC1; the interaction impairs NPC1-mediated cholesterol transport. Interacts with PGRMC1 and LDLR; the interaction increases LDL internalization. Interacts with histatin 1/HTN1; the interaction induces HTN1-stimulating wound healing. Interacts with TSPO.

Its subcellular location is the rough endoplasmic reticulum membrane. It localises to the nucleus membrane. In terms of biological role, sigma-2 receptor which contributes to ameliorate dysfunctional cellular processes and slow degenerative progression by regulating cell functions including cholesterol biosynthesis/trafficking, membrane trafficking, autophagy, lipid membrane-bound protein trafficking, and receptor stabilization at the cell surface. Forms a ternary complex with PGRMC1 receptor and low density lipoprotein receptor/LDLR at the plasma membrane, which increases LDLR-mediated LDL cholesterol internalization. Decreases lysosomal sterol transporter NPC1 availability to the cell, probably through NPC1-binding, hence controlling lipid transport, including cholesterol and LBPA, outside of late endosome/lysosome. Binds regio- and stereoselective ligand 20(S)-hydroxycholesterol (20(S)-OHC) which enhances TMEM97-NPC1 interaction and decreases TMEM97-PGRMC1 and TMEM97-TSPO interactions, thereby linking OHC binding to cholesterol homeostasis. Also able to bind cholesterol. Binds histatin 1 (Hst 1)/HN1 salivary peptide at the ER membrane, which is critical for increasing mitochondria-ER contacts and stimulating Hst1 wound healing properties. May alter the activity of some cytochrome P450 proteins. Although shows homologies with sterol isomerases (EXPERA domain), not able to catalyze sterol isomerization. However, may act as sensors of these molecules. Acts as a quality control factor in the ER, promoting the proteolytic degradation of nonproductive and extramitochondrial precursor proteins in the ER membrane thus removing them from the ER surface. The polypeptide is Sigma intracellular receptor 2 (Mus musculus (Mouse)).